The following is a 556-amino-acid chain: Oxygen-dependent choline dehydrogenase (556 aa).

4–33 (DYIIIGAGSAGNVLATRLTEDPNTSVLLLE) contributes to the FAD binding site. Catalysis depends on His-473, which acts as the Proton acceptor.

The protein belongs to the GMC oxidoreductase family. FAD serves as cofactor.

It catalyses the reaction choline + A = betaine aldehyde + AH2. It carries out the reaction betaine aldehyde + NAD(+) + H2O = glycine betaine + NADH + 2 H(+). It participates in amine and polyamine biosynthesis; betaine biosynthesis via choline pathway; betaine aldehyde from choline (cytochrome c reductase route): step 1/1. Involved in the biosynthesis of the osmoprotectant glycine betaine. Catalyzes the oxidation of choline to betaine aldehyde and betaine aldehyde to glycine betaine at the same rate. In Escherichia coli O139:H28 (strain E24377A / ETEC), this protein is Oxygen-dependent choline dehydrogenase.